Here is a 213-residue protein sequence, read N- to C-terminus: MAEEENKKFKVNANDAVNLAAEQSKSTSDKNLPEFGDMPIPDDTANLRKGPNLHDGLLALLPLIGVWRGQGQAAPPGEEEFTFGQQVVFAHDGENRISYDSRTWRMDDDGKPTEIPDRRESGFLRINDDDEIEMILTHSDGMVEILYGSPLNERAWQLESASTMATATGPTNLGPGKRLYGLMPNNDLGWVDERLIDGEMVPWQSAQLSRVVG.

Positions 17–42 (VNLAAEQSKSTSDKNLPEFGDMPIPD) are disordered. The short motif at 65–71 (GVWRGQG) is the GXWXGXG element.

The protein belongs to the nitrobindin family.

In Corynebacterium jeikeium (strain K411), this protein is Ferric nitrobindin-like protein.